A 179-amino-acid chain; its full sequence is CMT1A duplicated region transcript 4 protein homolog (179 aa).

Residues 1–15 (MISRPESSLSGLESS) show a composition bias toward low complexity. Positions 1-20 (MISRPESSLSGLESSQEVQK) are disordered.

This chain is CMT1A duplicated region transcript 4 protein homolog (Cdrt4), found in Mus musculus (Mouse).